The sequence spans 326 residues: dTDP-4-dehydro-6-deoxy-D-allose reductase (326 aa).

Residues 15 to 21 (GALGFIG) and 129 to 132 (MSSS) each bind NADP(+). The active-site Proton donor/acceptor is Tyr-160. NADP(+) contacts are provided by residues Lys-164 and 187-190 (PGNV).

The protein belongs to the NAD(P)-dependent epimerase/dehydratase family.

It catalyses the reaction dTDP-6-deoxy-alpha-D-allose + NAD(+) = dTDP-4-dehydro-6-deoxy-alpha-D-allose + NADH + H(+). It carries out the reaction dTDP-6-deoxy-alpha-D-allose + NADP(+) = dTDP-4-dehydro-6-deoxy-alpha-D-allose + NADPH + H(+). Catalyzes the stereospecific reduction of the C-4 keto group of dTDP-4-dehydro-6-deoxy-D-allose, leading to dTDP-6-deoxy-D-allose, an intermediate in the biosynthesis of the mycinose moiety of the chalcomycin antibiotic. The polypeptide is dTDP-4-dehydro-6-deoxy-D-allose reductase (chmD) (Streptomyces bikiniensis).